The chain runs to 444 residues: Glutamyl-tRNA(Gln) amidotransferase subunit D (444 aa).

The 333-residue stretch at 92–424 folds into the Asparaginase/glutaminase domain; that stretch reads SEIKIISTGG…EKIQNLMITN (333 aa). Catalysis depends on residues T102, T178, D179, and K257.

Belongs to the asparaginase 1 family. GatD subfamily. In terms of assembly, heterodimer of GatD and GatE.

The catalysed reaction is L-glutamyl-tRNA(Gln) + L-glutamine + ATP + H2O = L-glutaminyl-tRNA(Gln) + L-glutamate + ADP + phosphate + H(+). Functionally, allows the formation of correctly charged Gln-tRNA(Gln) through the transamidation of misacylated Glu-tRNA(Gln) in organisms which lack glutaminyl-tRNA synthetase. The reaction takes place in the presence of glutamine and ATP through an activated gamma-phospho-Glu-tRNA(Gln). The GatDE system is specific for glutamate and does not act on aspartate. This Saccharolobus solfataricus (strain ATCC 35092 / DSM 1617 / JCM 11322 / P2) (Sulfolobus solfataricus) protein is Glutamyl-tRNA(Gln) amidotransferase subunit D.